The sequence spans 341 residues: Retinol dehydrogenase 10 (341 aa).

A helical; Signal-anchor transmembrane segment spans residues 3 to 23; the sequence is IVVEFFVVTFKVLWAFVLAAA. Residue 40–64 coordinates NADP(+); that stretch reads LITGAGSGLGRLFALEFARRRALLV. Residue S197 coordinates substrate. Y210 serves as the catalytic Proton acceptor.

This sequence belongs to the short-chain dehydrogenases/reductases (SDR) family. In terms of tissue distribution, detected in retinal pigment epithelium (at protein level). Detected in retina, retinal pigment epithelium, and at lower levels in cornea, liver, kidney, pancreas, lung, brain and skeletal muscle.

It localises to the microsome membrane. The protein localises to the endoplasmic reticulum membrane. The enzyme catalyses all-trans-retinol + NADP(+) = all-trans-retinal + NADPH + H(+). The protein operates within cofactor metabolism; retinol metabolism. Its function is as follows. Retinol dehydrogenase with a clear preference for NADP. Converts all-trans-retinol to all-trans-retinal. Has no detectable activity towards 11-cis-retinol, 9-cis-retinol and 13-cis-retinol. The protein is Retinol dehydrogenase 10 (RDH10) of Bos taurus (Bovine).